The following is a 309-amino-acid chain: RuBisCO operon transcriptional regulator (309 aa).

In terms of domain architecture, HTH lysR-type spans 6 to 63 (ATLHQLKIFAAVARHMSFARAAEELHLTPPALSIQVRQLAEAVGQPLFDQIGKKIYLT). Residues 23–42 (FARAAEELHLTPPALSIQVR) constitute a DNA-binding region (H-T-H motif).

The protein belongs to the LysR transcriptional regulatory family.

Its function is as follows. Trans-acting transcriptional regulator of RuBisCO genes (rbcL1S1) expression. This is RuBisCO operon transcriptional regulator (rbcR) from Acidithiobacillus ferrooxidans (Thiobacillus ferrooxidans).